A 468-amino-acid polypeptide reads, in one-letter code: UDP-N-acetylmuramoylalanine--D-glutamate ligase (468 aa).

127–133 is a binding site for ATP; that stretch reads GTNGKTT.

The protein belongs to the MurCDEF family.

Its subcellular location is the cytoplasm. It carries out the reaction UDP-N-acetyl-alpha-D-muramoyl-L-alanine + D-glutamate + ATP = UDP-N-acetyl-alpha-D-muramoyl-L-alanyl-D-glutamate + ADP + phosphate + H(+). Its pathway is cell wall biogenesis; peptidoglycan biosynthesis. In terms of biological role, cell wall formation. Catalyzes the addition of glutamate to the nucleotide precursor UDP-N-acetylmuramoyl-L-alanine (UMA). In Prochlorococcus marinus (strain MIT 9312), this protein is UDP-N-acetylmuramoylalanine--D-glutamate ligase.